A 423-amino-acid chain; its full sequence is LysM domain-containing GPI-anchored protein 3 (423 aa).

An N-terminal signal peptide occupies residues 1–24 (MKNPEKPLLLFLILASSLASMATA). Intrachain disulfides connect Cys31/Cys97, Cys37/Cys160, Cys95/Cys158, and Cys97/Cys160. Residues 107–154 (THYKTRTSDTLGSIADSVYGGLVSPEQIQVANSETDLSVLDVGTKLVI) enclose the LysM 1 domain. Asn162 carries N-linked (GlcNAc...) asparagine glycosylation. The LysM 2 domain occupies 173-216 (LSYVVRGIDTMAGIAKRFSTSVTDLTNVNAMGAPDINPGDILAV). Cystine bridges form between Cys221-Cys253 and Cys248-Cys276. Asn238 is a glycosylation site (N-linked (GlcNAc...) asparagine). A glycan (N-linked (GlcNAc...) asparagine) is linked at Asn285. Gly394 carries the GPI-anchor amidated glycine lipid modification. A propeptide spans 395 to 423 (GSISIASCPLSYYSFIALLIPIGSCFFVF) (removed in mature form).

In terms of assembly, interacts with peptidoglycans.

The protein resides in the cell membrane. Required as a cell surface receptor for peptidoglycan (PGN) elicitor signaling leading to innate immunity. Plays an essential role in detecting PGNs and restricting bacterial growth (of Pseudomonas syringae pv. tomato DC3000 for example). This Arabidopsis thaliana (Mouse-ear cress) protein is LysM domain-containing GPI-anchored protein 3 (LYM3).